The sequence spans 554 residues: CTP synthase (554 aa).

Positions 1 to 265 (MTPLIFVTGG…DELVIVQFKL (265 aa)) are amidoligase domain. Position 13 (S13) interacts with CTP. UTP is bound at residue S13. Residues 14 to 19 (SLGKGI) and D71 contribute to the ATP site. Mg(2+)-binding residues include D71 and E139. Residues 146–148 (DIE), 186–191 (KTKPTQ), and K222 each bind CTP. Residues 186–191 (KTKPTQ) and K222 each bind UTP. The Glutamine amidotransferase type-1 domain maps to 292–545 (TIAVVGKYVD…VRAAREKKAG (254 aa)). L-glutamine is bound at residue G353. The active-site Nucleophile; for glutamine hydrolysis is C380. Residues 381–384 (YGMQ), E404, and R471 contribute to the L-glutamine site. Active-site residues include H518 and E520.

It belongs to the CTP synthase family. In terms of assembly, homotetramer.

The catalysed reaction is UTP + L-glutamine + ATP + H2O = CTP + L-glutamate + ADP + phosphate + 2 H(+). It catalyses the reaction L-glutamine + H2O = L-glutamate + NH4(+). It carries out the reaction UTP + NH4(+) + ATP = CTP + ADP + phosphate + 2 H(+). The protein operates within pyrimidine metabolism; CTP biosynthesis via de novo pathway; CTP from UDP: step 2/2. Its activity is regulated as follows. Allosterically activated by GTP, when glutamine is the substrate; GTP has no effect on the reaction when ammonia is the substrate. The allosteric effector GTP functions by stabilizing the protein conformation that binds the tetrahedral intermediate(s) formed during glutamine hydrolysis. Inhibited by the product CTP, via allosteric rather than competitive inhibition. In terms of biological role, catalyzes the ATP-dependent amination of UTP to CTP with either L-glutamine or ammonia as the source of nitrogen. Regulates intracellular CTP levels through interactions with the four ribonucleotide triphosphates. This Xanthomonas oryzae pv. oryzae (strain MAFF 311018) protein is CTP synthase.